The sequence spans 135 residues: CDGSH iron-sulfur domain-containing protein 2B (135 aa).

At 1–37 (MVLETISKIIKTQLPAYLKKFPLPETIGGFARLTVLD) the chain is on the lumenal side. A helical transmembrane segment spans residues 38-60 (WLRLLPLLGILTLLGYLTIRPFL). Over 61-135 (PKKKKQKDSL…GPLILKKKII (75 aa)) the chain is Cytoplasmic. Cysteine 99, cysteine 101, cysteine 110, and histidine 114 together coordinate [2Fe-2S] cluster.

Belongs to the CISD protein family. CISD2 subfamily. As to quaternary structure, homodimer. The cofactor is [2Fe-2S] cluster.

It is found in the endoplasmic reticulum membrane. It localises to the mitochondrion outer membrane. Functionally, regulator of autophagy that contributes to antagonize becn1-mediated cellular autophagy at the endoplasmic reticulum. Participates in the interaction of bcl2 with becn1 and is required for bcl2-mediated depression of endoplasmic reticulum Ca(2+) stores during autophagy. The chain is CDGSH iron-sulfur domain-containing protein 2B (cisd2b) from Oncorhynchus mykiss (Rainbow trout).